The sequence spans 180 residues: Large ribosomal subunit protein uL6 (180 aa).

It belongs to the universal ribosomal protein uL6 family. In terms of assembly, part of the 50S ribosomal subunit.

In terms of biological role, this protein binds to the 23S rRNA, and is important in its secondary structure. It is located near the subunit interface in the base of the L7/L12 stalk, and near the tRNA binding site of the peptidyltransferase center. The polypeptide is Large ribosomal subunit protein uL6 (Thermus thermophilus (strain ATCC BAA-163 / DSM 7039 / HB27)).